Here is a 711-residue protein sequence, read N- to C-terminus: DNA topoisomerase 3 (711 aa).

Residues 2-135 (KSLILAEKPS…IKRLWISSVT (134 aa)) form the Toprim domain. Mg(2+)-binding residues include Glu8 and Asp104. The Topo IA-type catalytic domain maps to 152–580 (YQNLYEAALA…EMKNFTFKVV (429 aa)). Residues 186-191 (SLGRVQ) form an interaction with DNA region. The O-(5'-phospho-DNA)-tyrosine intermediate role is filled by Tyr305.

The protein belongs to the type IA topoisomerase family. Mg(2+) serves as cofactor.

It catalyses the reaction ATP-independent breakage of single-stranded DNA, followed by passage and rejoining.. In terms of biological role, releases the supercoiling and torsional tension of DNA, which is introduced during the DNA replication and transcription, by transiently cleaving and rejoining one strand of the DNA duplex. Introduces a single-strand break via transesterification at a target site in duplex DNA. The scissile phosphodiester is attacked by the catalytic tyrosine of the enzyme, resulting in the formation of a DNA-(5'-phosphotyrosyl)-enzyme intermediate and the expulsion of a 3'-OH DNA strand. The free DNA strand then undergoes passage around the unbroken strand, thus removing DNA supercoils. Finally, in the religation step, the DNA 3'-OH attacks the covalent intermediate to expel the active-site tyrosine and restore the DNA phosphodiester backbone. The polypeptide is DNA topoisomerase 3 (Staphylococcus epidermidis (strain ATCC 12228 / FDA PCI 1200)).